Reading from the N-terminus, the 461-residue chain is Calcitonin gene-related peptide type 1 receptor (461 aa).

Residues 1-22 form the signal peptide; sequence MEKKCTLYFLVLLPFFMILVTA. The Extracellular portion of the chain corresponds to 23–139; it reads ELEESPEDSI…NTHEKVKTAL (117 aa). Intrachain disulfides connect cysteine 48/cysteine 74, cysteine 65/cysteine 105, and cysteine 88/cysteine 127. Asparagine 66, asparagine 118, and asparagine 123 each carry an N-linked (GlcNAc...) asparagine glycan. Residues 140-164 form a helical membrane-spanning segment; sequence NLFYLTIIGHGLSIASLLISLGIFF. The Cytoplasmic portion of the chain corresponds to 165–175; sequence YFKSLSCQRIT. Residues 176–198 form a helical membrane-spanning segment; sequence LHKNLFFSFVCNSVVTIIHLTAV. The Extracellular portion of the chain corresponds to 199-209; it reads ANNQALVATNP. Residues 210–238 form a helical membrane-spanning segment; the sequence is VSCKVSQFIHLYLMGCNYFWMLCEGIYLH. The Cytoplasmic segment spans residues 239–252; that stretch reads TLIVVAVFAEKQHL. The helical transmembrane segment at 253–273 threads the bilayer; the sequence is MWYYFLGWGFPLIPACIHAIA. The Extracellular portion of the chain corresponds to 274 to 289; sequence RSLYYNDNCWISSDTH. The interval 288 to 289 is required for RAMP3 interaction; the sequence is TH. The chain crosses the membrane as a helical span at residues 290–314; sequence LLYIIHGPICAALLVNLFFLLNIVR. The Cytoplasmic segment spans residues 315 to 329; that stretch reads VLITKLKVTHQAESN. A helical membrane pass occupies residues 330–351; it reads LYMKAVRATLILVPLLGIEFVL. Over 352–366 the chain is Extracellular; sequence IPWRPEGKIAEEVYD. The chain crosses the membrane as a helical span at residues 367-387; it reads YIMHILMHFQGLLVSTIFCFF. A phosphoserine mark is found at serine 420 and serine 445.

Belongs to the G-protein coupled receptor 2 family. Heterodimer of CALCRL and RAMP1; the receptor complex functions as CGRP receptor. Heterodimer of CALCRL and RAMP2 or CALCRL and RAMP3; the complexes function as adrenomedullin receptor. In terms of tissue distribution, predominantly expressed in the lung and heart.

It localises to the cell membrane. In terms of biological role, g protein-coupled receptor which specificity is determined by its interaction with receptor-activity-modifying proteins (RAMPs). Together with RAMP1, form the receptor complex for calcitonin-gene-related peptides CALCA/CGRP1 and CALCB/CGRP2. Together with RAMP2 or RAMP3, function as receptor complexes for adrenomedullin (ADM and ADM2). Ligand binding causes a conformation change that triggers signaling via guanine nucleotide-binding proteins (G proteins) and modulates the activity of downstream effectors. Activates cAMP-dependent pathway. This Homo sapiens (Human) protein is Calcitonin gene-related peptide type 1 receptor.